Here is a 423-residue protein sequence, read N- to C-terminus: Structure-specific endonuclease subunit SLX1 (423 aa).

Residues 23-105 (AFYCCYLLRS…QNTKVSRHAD (83 aa)) form the GIY-YIG domain. 2 disordered regions span residues 300–334 (RRRR…DALQ) and 365–406 (AHRP…LGLQ).

This sequence belongs to the SLX1 family. In terms of assembly, forms a heterodimer with SLX4. Requires a divalent metal cation as cofactor.

It localises to the nucleus. Its function is as follows. Catalytic subunit of the SLX1-SLX4 structure-specific endonuclease that resolves DNA secondary structures generated during DNA repair and recombination. Has endonuclease activity towards branched DNA substrates, introducing single-strand cuts in duplex DNA close to junctions with ss-DNA. The sequence is that of Structure-specific endonuclease subunit SLX1 from Paracoccidioides brasiliensis (strain Pb03).